The chain runs to 216 residues: Octanoyltransferase (216 aa).

Residues 32 to 207 enclose the BPL/LPL catalytic domain; sequence SDSQDELWIV…TFSQIMGYQQ (176 aa). Residues 71-78, 138-140, and 151-153 contribute to the substrate site; these read RGGQVTYH, SLG, and GLA. C169 functions as the Acyl-thioester intermediate in the catalytic mechanism.

The protein belongs to the LipB family.

Its subcellular location is the cytoplasm. The catalysed reaction is octanoyl-[ACP] + L-lysyl-[protein] = N(6)-octanoyl-L-lysyl-[protein] + holo-[ACP] + H(+). It participates in protein modification; protein lipoylation via endogenous pathway; protein N(6)-(lipoyl)lysine from octanoyl-[acyl-carrier-protein]: step 1/2. Its function is as follows. Catalyzes the transfer of endogenously produced octanoic acid from octanoyl-acyl-carrier-protein onto the lipoyl domains of lipoate-dependent enzymes. Lipoyl-ACP can also act as a substrate although octanoyl-ACP is likely to be the physiological substrate. The chain is Octanoyltransferase from Shewanella frigidimarina (strain NCIMB 400).